Consider the following 441-residue polypeptide: MTTLNIQAIQQDSLIKSLKNYEEIFWFQPEPTPIEQGLKRTSLTLADIQDAEARLTRFAPYLEKVFPELRSTQGKIESEIVSIPTMQHDCSKRFAIEPNGTWWLKKDSHLPISGSIKARGGIYEVLAHAEKLALKAGLVTLQDNYSQLDSDQARQFFSNYQIAVGSTGNLGLSIGIMSAKLGFRVSVHMSADARQWKKDKLRSLGVNVVEYASDYGVAVEQGRKAAESDPNCFFIDDENSTTLFLGYAVAGLRLKQQLIDQNIQVDAEHPLFVYLPCGVGGGPGGVSFGLKHALGEHVHCIFAEPTHSPCMLLGVYTGLHDQICVADIGLDNATAADGLAVGRASGFVGRAMQDLIDGYYTISDQHLFEFIRLMDQTQSIQLEPSAVAGVLGIYHVNTNKSYQQAYHLNAIQLKNATHLIWATGGGMVPPNEMQKYLKQCE.

K117 carries the N6-(pyridoxal phosphate)lysine modification.

This sequence belongs to the serine/threonine dehydratase family. DsdA subfamily. Pyridoxal 5'-phosphate is required as a cofactor.

It carries out the reaction D-serine = pyruvate + NH4(+). This chain is Probable D-serine dehydratase, found in Acinetobacter baylyi (strain ATCC 33305 / BD413 / ADP1).